We begin with the raw amino-acid sequence, 181 residues long: HGPRTase-like protein 2 (181 aa).

This sequence belongs to the purine/pyrimidine phosphoribosyltransferase family. Archaeal HPRT subfamily.

May catalyze a purine salvage reaction, the substrate is unknown. The chain is HGPRTase-like protein 2 from Haloferax volcanii (strain ATCC 29605 / DSM 3757 / JCM 8879 / NBRC 14742 / NCIMB 2012 / VKM B-1768 / DS2) (Halobacterium volcanii).